The following is a 177-amino-acid chain: Large ribosomal subunit protein uL6 (177 aa).

It belongs to the universal ribosomal protein uL6 family. In terms of assembly, part of the 50S ribosomal subunit.

Functionally, this protein binds to the 23S rRNA, and is important in its secondary structure. It is located near the subunit interface in the base of the L7/L12 stalk, and near the tRNA binding site of the peptidyltransferase center. This Aromatoleum aromaticum (strain DSM 19018 / LMG 30748 / EbN1) (Azoarcus sp. (strain EbN1)) protein is Large ribosomal subunit protein uL6.